Consider the following 733-residue polypeptide: Neutral ceramidase 3 (733 aa).

Residues 1–25 form the signal peptide; the sequence is MTRWSMSMHCTLFLLFLLRLTCIFS. Ser-307 functions as the Nucleophile in the catalytic mechanism. Asn-325 carries an N-linked (GlcNAc...) asparagine glycan.

Belongs to the neutral ceramidase family.

The protein resides in the secreted. It localises to the endoplasmic reticulum. Its subcellular location is the golgi apparatus. The enzyme catalyses an N-acylsphing-4-enine + H2O = sphing-4-enine + a fatty acid. Functionally, hydrolyzes the sphingolipid ceramide into sphingosine and free fatty acid. Promotes oxidative stress resistance. This is Neutral ceramidase 3 from Arabidopsis thaliana (Mouse-ear cress).